Reading from the N-terminus, the 392-residue chain is Keratin, type I cuticular Ha4 (392 aa).

A head region spans residues 1–56 (MSCESCLPALSCRTSCSSRPCVPPSCHGCTLPGACNIPANVGNCNWFCEGSFNGNE). The region spanning 56–367 (EKETMQFLND…SLLESEDCNL (312 aa)) is the IF rod domain. Residues 57–91 (KETMQFLNDRLASYMEKVRQLERENAELECRIQER) are coil 1A. The linker 1 stretch occupies residues 92–102 (NQQQDPLVCPA). The tract at residues 103 to 203 (YQAYFRTIEE…HEEEVNTLRC (101 aa)) is coil 1B. Residues 204-219 (QLGDRLNVEVDAAPTV) form a linker 12 region. The coil 2 stretch occupies residues 220–363 (DLNRVLNETR…NTYRSLLESE (144 aa)). Residues 364–392 (DCNLPCNPCATTNASGSCCGPCGSSKRCC) are tail.

Belongs to the intermediate filament family. As to expression, expressed in the hair root in the hair shaft cuticle and cortex.

This is Keratin, type I cuticular Ha4 from Mus musculus (Mouse).